The primary structure comprises 343 residues: Galactoside alpha-(1,2)-fucosyltransferase 2 (343 aa).

At 1-14 (MLVVQMPFSFPMAH) the chain is on the cytoplasmic side. A helical; Signal-anchor for type II membrane protein membrane pass occupies residues 15–28 (FILFVFTVSTIFHV). Over 29-343 (QQRLAKIQAM…AADLSPLLKH (315 aa)) the chain is Lumenal. 3 N-linked (GlcNAc...) asparagine glycosylation sites follow: Asn188, Asn282, and Asn308.

This sequence belongs to the glycosyltransferase 11 family.

It localises to the golgi apparatus. The protein localises to the golgi stack membrane. The catalysed reaction is a beta-D-galactosyl-(1-&gt;3)-N-acetyl-beta-D-glucosaminyl derivative + GDP-beta-L-fucose = an alpha-L-Fuc-(1-&gt;2)-beta-D-Gal-(1-&gt;3)-beta-D-GlcNAc derivative + GDP + H(+). It carries out the reaction a beta-D-galactosyl-(1-&gt;4)-N-acetyl-beta-D-glucosaminyl derivative + GDP-beta-L-fucose = an alpha-L-Fuc-(1-&gt;2)-beta-D-Gal-(1-&gt;4)-beta-D-GlcNAc derivative + GDP + H(+). The enzyme catalyses a neolactoside nLc4Cer + GDP-beta-L-fucose = a neolactoside IV(2)-alpha-Fuc-nLc4Cer + GDP + H(+). It catalyses the reaction a neolactoside nLc4Cer(d18:1(4E)) + GDP-beta-L-fucose = a neolactoside IV(2)-alpha-Fuc-nLc4Cer(d18:1(4E)) + GDP + H(+). The catalysed reaction is a ganglioside GM1 + GDP-beta-L-fucose = a ganglioside Fuc-GM1 + GDP + H(+). It carries out the reaction a ganglioside GA1 + GDP-beta-L-fucose = a ganglioside Fuc-GA1 + GDP + H(+). The enzyme catalyses Lc4Cer + GDP-beta-L-fucose = alpha-L-fucosyl-(1-&gt;2)-beta-D-galactosyl-(1-&gt;3)-N-acetyl-beta-D-glucosaminyl-(1-&gt;3)-beta-D-galactosyl-(1-&gt;4)-beta-D-glucosyl-(1&lt;-&gt;1')-ceramide + GDP + H(+). It catalyses the reaction a beta-D-Gal-(1-&gt;3)-beta-D-GlcNAc-(1-&gt;3)-beta-D-Gal-(1-&gt;4)-beta-D-Glc-(1&lt;-&gt;1')-Cer(d18:1(4E)) + GDP-beta-L-fucose = alpha-L-fucosyl-(1-&gt;2)- beta-D-galactosyl-(1-&gt;3)-N-acetyl-beta-D-glucosaminyl-(1-&gt;3)-beta-D-galactosyl-(1-&gt;4)-beta-D-glucosyl-(1&lt;-&gt;1')-N-acylsphing-4-enine + GDP + H(+). The catalysed reaction is a ganglioside GD1b + GDP-beta-L-fucose = a ganglioside Fuc-GD1b + GDP + H(+). It carries out the reaction a ganglioside GM1 (d18:1(4E)) + GDP-beta-L-fucose = a ganglioside Fuc-GM1 (d18:1(4E)) + GDP + H(+). The enzyme catalyses a globoside GalGb4Cer (d18:1(4E)) + GDP-beta-L-fucose = a globoside Globo-H (d18:1(4E)) + GDP + H(+). It catalyses the reaction a lactoside III(4)-a-Fuc-Lc4Cer + GDP-beta-L-fucose = a lactoside IV(2),III(4)-a-[Fuc]2-Lc4Cer + GDP + H(+). The catalysed reaction is beta-D-galactosyl-(1-&gt;3)-N-acetyl-D-galactosamine + GDP-beta-L-fucose = alpha-L-fucosyl-(1-&gt;2)-beta-D-galactosyl-(1-&gt;3)-N-acetyl-D-galactosamine + GDP + H(+). It functions in the pathway protein modification; protein glycosylation. Its function is as follows. Catalyzes the transfer of L-fucose, from a guanosine diphosphate-beta-L-fucose, to the terminal galactose on both O- and N-linked glycans chains of cell surface glycoproteins and glycolipids and the resulting epitope regulates several processes such as cell-cell interaction including host-microbe interaction, cell surface expression and cell proliferation. Preferentially fucosylates gangliosides GA1 and GM1 in the antrum, cecum and colon and in the female reproductive organs. Fucosylated host glycoproteins or glycolipids mediate interaction with intestinal microbiota influencing its composition. Creates a soluble precursor oligosaccharide FuC-alpha ((1,2)Galbeta-) called the H antigen which is an essential substrate for the final step in the soluble ABO blood group antigen synthesis pathway. The protein is Galactoside alpha-(1,2)-fucosyltransferase 2 of Gorilla gorilla gorilla (Western lowland gorilla).